We begin with the raw amino-acid sequence, 300 residues long: Tegument protein VP22 (300 aa).

Residues 1 to 148 (MTSRRSVKSC…PARGRRPAQA (148 aa)) are disordered. Basic and acidic residues-rich tracts occupy residues 10-22 (CPRE…HEEL) and 50-61 (PRGEVRFLHYDE). The Nuclear localization signal motif lies at 163–166 (GRTK). The segment at 174–267 (KKLHFSTAPP…LVNPDAAQDV (94 aa)) is interaction with gE. Positions 232-244 (LNELLDLTTIRVT) match the Nuclear export signal motif. Residues 269-292 (ATAAARGRPAGRAAATARAPARSA) are compositionally biased toward low complexity. The disordered stretch occupies residues 269 to 300 (ATAAARGRPAGRAAATARAPARSASRPRRPLE).

The protein belongs to the alphaherpesvirinae VP22 tegument protein family. Interacts with gE (via C-terminus); this interaction is necessary for the recruitment of VP22 to the Golgi and its packaging into virions. Interacts with gM (via C-terminus). Interacts with VP16; this interaction allows the formation of a tripartite complex composed of VP16, VP22 and UL41/VHS. Interacts with the capsid-binding protein UL16. Interacts with host CGAS. Post-translationally, highly phosphorylated in the host cell. Packaging is selective for underphosphorylated forms.

It localises to the virion tegument. The protein localises to the host cytoplasm. The protein resides in the host nucleus. Its subcellular location is the host Golgi apparatus. Functionally, tegument protein that plays different roles during the time course of infection. Participates in both the accumulation of viral mRNAs and viral protein translation at late time of infection. Modulates the RNase activity of the virion host shutoff protein UL41 probably to ensure necessary levels of key cellular mRNAs and proteins. Plays a role in microtubule reorganization that occurs after viral infection by stabilizing microtubule network. Plays a role in the inhibition of host innate immune system by targeting the CGAS enzymatic activity which is the principal cytosolic DNA sensor that detects invading viral DNA. Acts by mediating disruption of liquid-like droplets in which CGAS is activated, thereby preventing CGAS activity. This is Tegument protein VP22 from Homo sapiens (Human).